The following is a 78-amino-acid chain: Metallothionein-like protein type 2 (78 aa).

This sequence belongs to the metallothionein superfamily. Type 15 family.

Functionally, metallothioneins have a high content of cysteine residues that bind various heavy metals. The sequence is that of Metallothionein-like protein type 2 from Musa acuminata (Banana).